A 364-amino-acid polypeptide reads, in one-letter code: Methylthioribose-1-phosphate isomerase (364 aa).

Substrate is bound by residues 53–55 (RGA), arginine 90, and glutamine 203. The Proton donor role is filled by aspartate 244. 254-255 (NK) provides a ligand contact to substrate.

It belongs to the eIF-2B alpha/beta/delta subunits family. MtnA subfamily.

The catalysed reaction is 5-(methylsulfanyl)-alpha-D-ribose 1-phosphate = 5-(methylsulfanyl)-D-ribulose 1-phosphate. It functions in the pathway amino-acid biosynthesis; L-methionine biosynthesis via salvage pathway; L-methionine from S-methyl-5-thio-alpha-D-ribose 1-phosphate: step 1/6. Its function is as follows. Catalyzes the interconversion of methylthioribose-1-phosphate (MTR-1-P) into methylthioribulose-1-phosphate (MTRu-1-P). This is Methylthioribose-1-phosphate isomerase from Sinorhizobium medicae (strain WSM419) (Ensifer medicae).